Consider the following 123-residue polypeptide: Protein Wnt-3a (123 aa).

S1 carries the O-palmitoleoyl serine lipid modification. An intrachain disulfide couples C89 to C104. A glycan (N-linked (GlcNAc...) asparagine) is linked at N90.

It belongs to the Wnt family. In terms of processing, disulfide bonds have critical and distinct roles in secretion and activity. Loss of each conserved cysteine results in high molecular weight oxidized Wnt oligomers, which are formed through inter-Wnt disulfide bonding. Palmitoleoylation is required for efficient binding to frizzled receptors. Depalmitoleoylation leads to Wnt signaling pathway inhibition.

The protein resides in the secreted. Its subcellular location is the extracellular space. It localises to the extracellular matrix. Its function is as follows. Ligand for members of the frizzled family of seven transmembrane receptors. Functions in the canonical Wnt signaling pathway that results in activation of transcription factors of the TCF/LEF family. Required for normal embryonic mesoderm development and formation of caudal somites. Required for normal morphogenesis of the developing neural tube. In Plethodon jordani (Red-cheeked salamander), this protein is Protein Wnt-3a (WNT-3A).